Reading from the N-terminus, the 882-residue chain is Valine--tRNA ligase (882 aa).

The 'HIGH' region signature appears at 45–55 (PNVTGKLHLGH). The 'KMSKS' region signature appears at 519–523 (KMSKS). Lys522 lines the ATP pocket. A coiled-coil region spans residues 808–882 (LADLLNVEEE…RIAEMQKLVK (75 aa)).

This sequence belongs to the class-I aminoacyl-tRNA synthetase family. ValS type 1 subfamily. In terms of assembly, monomer.

Its subcellular location is the cytoplasm. The catalysed reaction is tRNA(Val) + L-valine + ATP = L-valyl-tRNA(Val) + AMP + diphosphate. Functionally, catalyzes the attachment of valine to tRNA(Val). As ValRS can inadvertently accommodate and process structurally similar amino acids such as threonine, to avoid such errors, it has a 'posttransfer' editing activity that hydrolyzes mischarged Thr-tRNA(Val) in a tRNA-dependent manner. The polypeptide is Valine--tRNA ligase (Streptococcus pyogenes serotype M3 (strain ATCC BAA-595 / MGAS315)).